We begin with the raw amino-acid sequence, 59 residues long: Cuticle protein 7 isoform a (59 aa).

At Gln-1 the chain carries Pyrrolidone carboxylic acid.

This chain is Cuticle protein 7 isoform a, found in Limulus polyphemus (Atlantic horseshoe crab).